Consider the following 265-residue polypeptide: Tryptophan 2,3-dioxygenase (265 aa).

Residues 38–42 and arginine 104 each bind substrate; that span reads FIVVH. Histidine 223 provides a ligand contact to heme. Threonine 237 provides a ligand contact to substrate.

Belongs to the tryptophan 2,3-dioxygenase family. Homotetramer. The cofactor is heme.

It carries out the reaction L-tryptophan + O2 = N-formyl-L-kynurenine. Its pathway is amino-acid degradation; L-tryptophan degradation via kynurenine pathway; L-kynurenine from L-tryptophan: step 1/2. In terms of biological role, heme-dependent dioxygenase that catalyzes the oxidative cleavage of the L-tryptophan (L-Trp) pyrrole ring and converts L-tryptophan to N-formyl-L-kynurenine. Catalyzes the oxidative cleavage of the indole moiety. This Anaeromyxobacter sp. (strain K) protein is Tryptophan 2,3-dioxygenase.